The sequence spans 311 residues: MKVAVLGAAGGIGQALALLLKTQLPAGSKLSLYDIAPVIPGVAVDLSHIPTAVEVKGFAGEDPTAALEGADVVLISAGVARKPGMDRSDLFNINAGIVRNLVEKCAATCPKALIGIITNPVNTTVAIAAEVLKKAGVYDKNRLFGVTTLDVIRSETFVAEAKDLNVADVKVPVIGGHSGVTILPLLSQVEGVSFTDAEIAALTTRIQNAGTEVVEAKAGGGSATLSMGQAACRFGLSLVRGLQGEANVVECAYVDGGSEHTEFFAQPVVLGKNGIEQVLAYGEVSAFEANARDAMLDTLKADIQLGIEFVK.

Residues 7-13 (GAAGGIG) and D34 each bind NAD(+). Residues R81 and R87 each contribute to the substrate site. NAD(+) is bound by residues N94 and 117 to 119 (ITN). Positions 119 and 153 each coordinate substrate. The active-site Proton acceptor is the H177. Residue M227 coordinates NAD(+).

The protein belongs to the LDH/MDH superfamily. MDH type 1 family. Homodimer.

It carries out the reaction (S)-malate + NAD(+) = oxaloacetate + NADH + H(+). Its function is as follows. Catalyzes the reversible oxidation of malate to oxaloacetate. The polypeptide is Malate dehydrogenase (Shewanella halifaxensis (strain HAW-EB4)).